Consider the following 701-residue polypeptide: Kinesin-like protein KIN-10C (701 aa).

Positions valine 8–glycine 318 constitute a Kinesin motor domain. Glycine 94–threonine 101 is a binding site for ATP.

Belongs to the TRAFAC class myosin-kinesin ATPase superfamily. Kinesin family. KIN-10 subfamily.

The protein is Kinesin-like protein KIN-10C of Arabidopsis thaliana (Mouse-ear cress).